The sequence spans 379 residues: Lipid-A-disaccharide synthase (379 aa).

The protein belongs to the LpxB family.

It catalyses the reaction a lipid X + a UDP-2-N,3-O-bis[(3R)-3-hydroxyacyl]-alpha-D-glucosamine = a lipid A disaccharide + UDP + H(+). It functions in the pathway bacterial outer membrane biogenesis; LPS lipid A biosynthesis. Condensation of UDP-2,3-diacylglucosamine and 2,3-diacylglucosamine-1-phosphate to form lipid A disaccharide, a precursor of lipid A, a phosphorylated glycolipid that anchors the lipopolysaccharide to the outer membrane of the cell. In Idiomarina loihiensis (strain ATCC BAA-735 / DSM 15497 / L2-TR), this protein is Lipid-A-disaccharide synthase.